The sequence spans 34 residues: Photosystem II reaction center protein M (34 aa).

The chain crosses the membrane as a helical span at residues 5-25 (ILAFIAIVLFISVPTAFLLII).

This sequence belongs to the PsbM family. As to quaternary structure, PSII is composed of 1 copy each of membrane proteins PsbA, PsbB, PsbC, PsbD, PsbE, PsbF, PsbH, PsbI, PsbJ, PsbK, PsbL, PsbM, PsbT, PsbX, PsbY, PsbZ, Psb30/Ycf12, at least 3 peripheral proteins of the oxygen-evolving complex and a large number of cofactors. It forms dimeric complexes.

It is found in the plastid. The protein resides in the chloroplast thylakoid membrane. One of the components of the core complex of photosystem II (PSII). PSII is a light-driven water:plastoquinone oxidoreductase that uses light energy to abstract electrons from H(2)O, generating O(2) and a proton gradient subsequently used for ATP formation. It consists of a core antenna complex that captures photons, and an electron transfer chain that converts photonic excitation into a charge separation. This subunit is found at the monomer-monomer interface. This chain is Photosystem II reaction center protein M, found in Cycas taitungensis (Prince sago).